The chain runs to 469 residues: Adenosylhomocysteinase (469 aa).

Positions 58, 133, and 195 each coordinate substrate. Position 196 to 198 (196 to 198 (TTT)) interacts with NAD(+). 2 residues coordinate substrate: Lys225 and Asp229. NAD(+)-binding positions include Asn230, 259–264 (GFGDVG), Glu282, Asn317, 338–340 (IGH), and Asn383.

It belongs to the adenosylhomocysteinase family. It depends on NAD(+) as a cofactor.

It is found in the cytoplasm. The enzyme catalyses S-adenosyl-L-homocysteine + H2O = L-homocysteine + adenosine. The protein operates within amino-acid biosynthesis; L-homocysteine biosynthesis; L-homocysteine from S-adenosyl-L-homocysteine: step 1/1. In terms of biological role, may play a key role in the regulation of the intracellular concentration of adenosylhomocysteine. The sequence is that of Adenosylhomocysteinase from Rhodopseudomonas palustris (strain ATCC BAA-98 / CGA009).